A 395-amino-acid polypeptide reads, in one-letter code: 8-amino-7-oxononanoate synthase (395 aa).

Arginine 24 lines the substrate pocket. 111–112 (GF) contacts pyridoxal 5'-phosphate. Histidine 136 provides a ligand contact to substrate. Residues serine 184, 209-212 (DDAH), and 240-243 (TLSK) each bind pyridoxal 5'-phosphate. N6-(pyridoxal phosphate)lysine is present on lysine 243. Substrate is bound at residue threonine 357.

This sequence belongs to the class-II pyridoxal-phosphate-dependent aminotransferase family. BioF subfamily. In terms of assembly, homodimer. It depends on pyridoxal 5'-phosphate as a cofactor.

It carries out the reaction 6-carboxyhexanoyl-[ACP] + L-alanine + H(+) = (8S)-8-amino-7-oxononanoate + holo-[ACP] + CO2. It participates in cofactor biosynthesis; biotin biosynthesis. Catalyzes the decarboxylative condensation of pimeloyl-[acyl-carrier protein] and L-alanine to produce 8-amino-7-oxononanoate (AON), [acyl-carrier protein], and carbon dioxide. This Alkaliphilus metalliredigens (strain QYMF) protein is 8-amino-7-oxononanoate synthase.